We begin with the raw amino-acid sequence, 495 residues long: ATP synthase subunit beta, chloroplastic (495 aa).

172–179 (GGAGVGKT) provides a ligand contact to ATP.

Belongs to the ATPase alpha/beta chains family. F-type ATPases have 2 components, CF(1) - the catalytic core - and CF(0) - the membrane proton channel. CF(1) has five subunits: alpha(3), beta(3), gamma(1), delta(1), epsilon(1). CF(0) has four main subunits: a(1), b(1), b'(1) and c(9-12).

The protein localises to the plastid. Its subcellular location is the chloroplast thylakoid membrane. It carries out the reaction ATP + H2O + 4 H(+)(in) = ADP + phosphate + 5 H(+)(out). Its function is as follows. Produces ATP from ADP in the presence of a proton gradient across the membrane. The catalytic sites are hosted primarily by the beta subunits. This chain is ATP synthase subunit beta, chloroplastic, found in Brimeura amethystina (Spanish hyacinth).